The sequence spans 194 residues: Probable GTP-binding protein EngB (194 aa).

The EngB-type G domain occupies 22-194 (GKPEIALVGR…EVWHWIEQHI (173 aa)). GTP contacts are provided by residues 30–37 (GRSNVGKS), 57–61 (GKTQT), 75–78 (DVPG), 142–145 (TKSD), and 175–177 (FSS). Ser37 and Thr59 together coordinate Mg(2+).

It belongs to the TRAFAC class TrmE-Era-EngA-EngB-Septin-like GTPase superfamily. EngB GTPase family. It depends on Mg(2+) as a cofactor.

Necessary for normal cell division and for the maintenance of normal septation. This chain is Probable GTP-binding protein EngB, found in Leuconostoc mesenteroides subsp. mesenteroides (strain ATCC 8293 / DSM 20343 / BCRC 11652 / CCM 1803 / JCM 6124 / NCDO 523 / NBRC 100496 / NCIMB 8023 / NCTC 12954 / NRRL B-1118 / 37Y).